A 1042-amino-acid polypeptide reads, in one-letter code: Isoleucine--tRNA ligase (1042 aa).

The 'HIGH' region signature appears at 59–69 (PFANGLPHYGH). A 'KMSKS' region motif is present at residues 619 to 623 (KMSKS). Lys622 provides a ligand contact to ATP.

Belongs to the class-I aminoacyl-tRNA synthetase family. IleS type 2 subfamily. In terms of assembly, monomer. Zn(2+) is required as a cofactor.

It localises to the cytoplasm. The enzyme catalyses tRNA(Ile) + L-isoleucine + ATP = L-isoleucyl-tRNA(Ile) + AMP + diphosphate. Functionally, catalyzes the attachment of isoleucine to tRNA(Ile). As IleRS can inadvertently accommodate and process structurally similar amino acids such as valine, to avoid such errors it has two additional distinct tRNA(Ile)-dependent editing activities. One activity is designated as 'pretransfer' editing and involves the hydrolysis of activated Val-AMP. The other activity is designated 'posttransfer' editing and involves deacylation of mischarged Val-tRNA(Ile). The chain is Isoleucine--tRNA ligase from Nocardia farcinica (strain IFM 10152).